Here is a 272-residue protein sequence, read N- to C-terminus: Probable feruloyl esterase C (272 aa).

The first 22 residues, 1-22 (MVPTMIYSAILALSAFTPSVLA), serve as a signal peptide directing secretion.

Belongs to the faeC family.

It is found in the secreted. It catalyses the reaction feruloyl-polysaccharide + H2O = ferulate + polysaccharide.. Its function is as follows. Involved in degradation of plant cell walls. Hydrolyzes the feruloyl-arabinose ester bond in arabinoxylans, and the feruloyl-galactose ester bond in pectin. Active against paranitrophenyl-acetate, methyl ferulate and wheat arabinoxylan. The sequence is that of Probable feruloyl esterase C (faeC) from Neosartorya fischeri (strain ATCC 1020 / DSM 3700 / CBS 544.65 / FGSC A1164 / JCM 1740 / NRRL 181 / WB 181) (Aspergillus fischerianus).